A 302-amino-acid polypeptide reads, in one-letter code: tRNA pseudouridine synthase B (302 aa).

Residue Asp47 is the Nucleophile of the active site.

This sequence belongs to the pseudouridine synthase TruB family. Type 1 subfamily.

The enzyme catalyses uridine(55) in tRNA = pseudouridine(55) in tRNA. Functionally, responsible for synthesis of pseudouridine from uracil-55 in the psi GC loop of transfer RNAs. The polypeptide is tRNA pseudouridine synthase B (Methylobacillus flagellatus (strain ATCC 51484 / DSM 6875 / VKM B-1610 / KT)).